The following is a 307-amino-acid chain: Nicotinamide/nicotinic acid mononucleotide adenylyltransferase 2 (307 aa).

NAD(+) contacts are provided by serine 16 and phenylalanine 17. Histidine 24 serves as a coordination point for ATP. Residues tryptophan 92, threonine 95, glycine 200, aspartate 202, leucine 212, tryptophan 213, and arginine 232 each coordinate NAD(+). Residue 271–274 (TKSR) coordinates ATP.

This sequence belongs to the eukaryotic NMN adenylyltransferase family. Monomer. Mg(2+) serves as cofactor.

It is found in the golgi apparatus membrane. The protein resides in the cytoplasmic vesicle membrane. It localises to the cytoplasm. Its subcellular location is the cell projection. The protein localises to the axon. It carries out the reaction beta-nicotinamide D-ribonucleotide + ATP + H(+) = diphosphate + NAD(+). It catalyses the reaction nicotinate beta-D-ribonucleotide + ATP + H(+) = deamido-NAD(+) + diphosphate. It functions in the pathway cofactor biosynthesis; NAD(+) biosynthesis; NAD(+) from nicotinamide D-ribonucleotide: step 1/1. The protein operates within cofactor biosynthesis; NAD(+) biosynthesis; deamido-NAD(+) from nicotinate D-ribonucleotide: step 1/1. Nicotinamide/nicotinate-nucleotide adenylyltransferase that acts as an axon maintenance factor. Axon survival factor required for the maintenance of healthy axons: acts by delaying Wallerian axon degeneration, an evolutionarily conserved process that drives the loss of damaged axons. Catalyzes the formation of NAD(+) from nicotinamide mononucleotide (NMN) and ATP. Can also use the deamidated form; nicotinic acid mononucleotide (NaMN) as substrate but with a lower efficiency. Also catalyzes the reverse reaction, i.e. the pyrophosphorolytic cleavage of NAD(+). For the pyrophosphorolytic activity prefers NAD(+), NADH and NaAD as substrates and degrades nicotinic acid adenine dinucleotide phosphate (NHD) less effectively. Also acts as an activator of ADP-ribosylation by supporting the catalytic activity of PARP16 and promoting mono-ADP-ribosylation of ribosomes by PARP16. May be involved in the maintenance of axonal integrity. This Xenopus tropicalis (Western clawed frog) protein is Nicotinamide/nicotinic acid mononucleotide adenylyltransferase 2 (nmnat2).